Consider the following 76-residue polypeptide: MAMKTSHVLLLCLMFVIGFVEARRSDTGPDISTPPSGSCGASIAEFNSSQILAKRAPPCRRPRLQNSEDVTHTTLP.

An N-terminal signal peptide occupies residues 1-22 (MAMKTSHVLLLCLMFVIGFVEA). A propeptide spans 23–35 (RRSDTGPDISTPP) (removed in mature form). A SxS motif essential for MIK2 binding motif is present at residues 36–38 (SGS). Residues 36–49 (SGSCGASIAEFNSS) carry the SCOOP motif motif. The segment at 56-76 (APPCRRPRLQNSEDVTHTTLP) is disordered. Polar residues predominate over residues 64–76 (LQNSEDVTHTTLP).

The protein belongs to the serine rich endogenous peptide (SCOOP) phytocytokine family. Interacts with MIK2 (via extracellular leucine-rich repeat domain); this interaction triggers the formation of complex between MIK2 and the BAK1/SERK3 and SERK4 coreceptors, and subsequent BAK1 activation by phosphorylation. Mainly expressed in young developing leaves, hydathodes, immature flowers and elongating pollen tubes.

It is found in the cell membrane. The protein localises to the secreted. Its subcellular location is the extracellular space. It localises to the apoplast. The protein resides in the endoplasmic reticulum. Brassicaceae-specific phytocytokine (plant endogenous peptide released into the apoplast) perceived by MIK2 in a BAK1/SERK3 and SERK4 coreceptors-dependent manner, that modulates various physiological and antimicrobial processes including growth prevention and reactive oxygen species (ROS) response regulation. Inhibits the fungal growth of Alternaria brassicicola, Sclerotinia sclerotiorum, Fusarium graminearum, yeast (Saccharomyces) and Botrytis cinerea, thus being an antimicrobial peptide (AMP). Promotes resistance to A.brassicicola and B.cinerea. This chain is Peptide ARACIN 1, found in Arabidopsis thaliana (Mouse-ear cress).